The chain runs to 267 residues: Probable ribosomal RNA small subunit methyltransferase A (267 aa).

5 residues coordinate S-adenosyl-L-methionine: Leu12, Gly37, Glu58, Asp83, and Asn100.

This sequence belongs to the class I-like SAM-binding methyltransferase superfamily. rRNA adenine N(6)-methyltransferase family. RsmA subfamily.

It localises to the cytoplasm. Specifically dimethylates two adjacent adenosines in the loop of a conserved hairpin near the 3'-end of 16S rRNA in the 30S particle. May play a critical role in biogenesis of 30S subunits. In Methanococcus vannielii (strain ATCC 35089 / DSM 1224 / JCM 13029 / OCM 148 / SB), this protein is Probable ribosomal RNA small subunit methyltransferase A.